Reading from the N-terminus, the 359-residue chain is Peptide methionine sulfoxide reductase MsrA/MsrB (359 aa).

Positions 36-189 are peptide methionine sulfoxide reductase A; it reads RVIYLAGGCF…PGGYCHIDLK (154 aa). Cys44 is an active-site residue. One can recognise a MsrB domain in the interval 206-329; it reads DEVLKKKLTK…NSAALRFIPL (124 aa). Catalysis depends on Cys318, which acts as the Nucleophile.

The protein in the N-terminal section; belongs to the MsrA Met sulfoxide reductase family. This sequence in the C-terminal section; belongs to the MsrB Met sulfoxide reductase family.

It carries out the reaction L-methionyl-[protein] + [thioredoxin]-disulfide + H2O = L-methionyl-(S)-S-oxide-[protein] + [thioredoxin]-dithiol. The catalysed reaction is [thioredoxin]-disulfide + L-methionine + H2O = L-methionine (S)-S-oxide + [thioredoxin]-dithiol. It catalyses the reaction L-methionyl-[protein] + [thioredoxin]-disulfide + H2O = L-methionyl-(R)-S-oxide-[protein] + [thioredoxin]-dithiol. Its function is as follows. Has an important function as a repair enzyme for proteins that have been inactivated by oxidation. Catalyzes the reversible oxidation-reduction of methionine sulfoxide in proteins to methionine. This Helicobacter pylori (strain J99 / ATCC 700824) (Campylobacter pylori J99) protein is Peptide methionine sulfoxide reductase MsrA/MsrB (msrAB).